We begin with the raw amino-acid sequence, 230 residues long: Cytidylate kinase (230 aa).

12–20 (GPSGAGKGT) is a binding site for ATP.

This sequence belongs to the cytidylate kinase family. Type 1 subfamily.

The protein localises to the cytoplasm. The enzyme catalyses CMP + ATP = CDP + ADP. The catalysed reaction is dCMP + ATP = dCDP + ADP. The sequence is that of Cytidylate kinase from Yersinia pseudotuberculosis serotype O:1b (strain IP 31758).